The following is a 206-amino-acid chain: Ribosomal RNA large subunit methyltransferase E (206 aa).

G61, W63, D81, D97, and D122 together coordinate S-adenosyl-L-methionine. The Proton acceptor role is filled by K162.

It belongs to the class I-like SAM-binding methyltransferase superfamily. RNA methyltransferase RlmE family.

It is found in the cytoplasm. The catalysed reaction is uridine(2552) in 23S rRNA + S-adenosyl-L-methionine = 2'-O-methyluridine(2552) in 23S rRNA + S-adenosyl-L-homocysteine + H(+). In terms of biological role, specifically methylates the uridine in position 2552 of 23S rRNA at the 2'-O position of the ribose in the fully assembled 50S ribosomal subunit. This chain is Ribosomal RNA large subunit methyltransferase E, found in Neisseria meningitidis serogroup C / serotype 2a (strain ATCC 700532 / DSM 15464 / FAM18).